The sequence spans 215 residues: Cytochrome b6 (215 aa).

A helical transmembrane segment spans residues 32–52; it reads IFYCLGGITLTCFLVQVATGF. Position 35 (cysteine 35) interacts with heme c. Histidine 86 and histidine 100 together coordinate heme b. 3 helical membrane passes run 90–110, 116–136, and 186–206; these read ASMM…TGGF, LTWV…VTGY, and LHTF…FLMI. Positions 187 and 202 each coordinate heme b.

It belongs to the cytochrome b family. PetB subfamily. As to quaternary structure, the 4 large subunits of the cytochrome b6-f complex are cytochrome b6, subunit IV (17 kDa polypeptide, PetD), cytochrome f and the Rieske protein, while the 4 small subunits are PetG, PetL, PetM and PetN. The complex functions as a dimer. Heme b is required as a cofactor. It depends on heme c as a cofactor.

The protein resides in the plastid. It localises to the chloroplast thylakoid membrane. In terms of biological role, component of the cytochrome b6-f complex, which mediates electron transfer between photosystem II (PSII) and photosystem I (PSI), cyclic electron flow around PSI, and state transitions. This is Cytochrome b6 from Physcomitrium patens (Spreading-leaved earth moss).